Consider the following 375-residue polypeptide: 23S rRNA (uracil(747)-C(5))-methyltransferase RlmC (375 aa).

The [4Fe-4S] cluster site is built by C3, C11, C14, and C87. S-adenosyl-L-methionine is bound by residues Q212, F241, E262, and N307. Residue C334 is the Nucleophile of the active site.

This sequence belongs to the class I-like SAM-binding methyltransferase superfamily. RNA M5U methyltransferase family. RlmC subfamily.

The enzyme catalyses uridine(747) in 23S rRNA + S-adenosyl-L-methionine = 5-methyluridine(747) in 23S rRNA + S-adenosyl-L-homocysteine + H(+). In terms of biological role, catalyzes the formation of 5-methyl-uridine at position 747 (m5U747) in 23S rRNA. This chain is 23S rRNA (uracil(747)-C(5))-methyltransferase RlmC, found in Shigella sonnei (strain Ss046).